Reading from the N-terminus, the 129-residue chain is UPF0212 protein Mbar_A2902 (129 aa).

This sequence belongs to the UPF0212 family.

This Methanosarcina barkeri (strain Fusaro / DSM 804) protein is UPF0212 protein Mbar_A2902.